A 667-amino-acid chain; its full sequence is MKTNRAYSTLEVKALDDEKRVITGIASTPSPDRMQDVVEPKGAQFKLPIPFLWQHNHDEPIGHVTEAKVTQKGIEVSVQLTQVEEPGKLKDRLDEAWQSIKSGLVRGLSIGFSAKEFEQIPGSWGLRFLSWEWFELSAVTIPANAEATITSVKSIDREQRAALGIKSVPVVRVTPAGASAIKTKTIKVPKPQEGNDMKTTAEQIAEFEATRVTKAAEMEAIMTKAAEAGETLDAEQSEQFDTLEAEIAAIDKHIGRLKQMQKAQAANAKPVTEEAGAQRMANVKALDFKEVQVRAKNTQKLEPGIAFARAAKCLALGHLEHRDAIGIAKSLYDGQDSIIAATQRLVTKAAVAAATTSDATWAGPLVGDETSVFADFVEYLRPQTILGRFGTNGIPSLRRVPFRVPLIGQTSGGDGYWVGEGQAKPLTKFDFERKTLEPLKVANIAVATMEVIRDSSPSADVIIRDQLAAALRERLDIDFIDPAKAAVAGVSPASILNGVAGIPSSGNTADDVRADIRALFNAFIAANNAPTSGVWLMPATTALALSLMQNPLGQAEFPGISMTGGTLFGLPVIVSEYIPTASAGAVVALVNASDIYLGDEGGVDLSMSTEASLQMDNAPDNPTTASTVLVSLWQRNLVGFRAERAINWARRRASAVAYLTGVNWGAA.

The segment at 8–154 is prohead protease activity; it reads STLEVKALDD…AEATITSVKS (147 aa).

The prohead protease may be autocatalytically cleaved giving rise to the mature capsid protein.

The protein resides in the virion. Its function is as follows. The C-terminus contains the capsid protein. The N-terminal region may act as a prohead protease. The chain is Capsid polyprotein from Pseudomonas aeruginosa.